Consider the following 346-residue polypeptide: Probable RNA methyltransferase PA14_40730 (346 aa).

Glu-91 functions as the Proton acceptor in the catalytic mechanism. The region spanning Leu-94–Asp-320 is the Radical SAM core domain. An intrachain disulfide couples Cys-101 to Cys-325. [4Fe-4S] cluster contacts are provided by Cys-108, Cys-112, and Cys-115. S-adenosyl-L-methionine is bound by residues Gly-153–Glu-154, Ser-183, Ser-206–His-208, and Asn-282. Residue Cys-325 is the S-methylcysteine intermediate of the active site.

This sequence belongs to the radical SAM superfamily. RlmN family. It depends on [4Fe-4S] cluster as a cofactor.

It localises to the cytoplasm. The chain is Probable RNA methyltransferase PA14_40730 from Pseudomonas aeruginosa (strain UCBPP-PA14).